Consider the following 226-residue polypeptide: Ribonuclease 3 (226 aa).

The region spanning 6–128 is the RNase III domain; the sequence is INRLQRKLGY…LIGGIFLDSD (123 aa). Glu-41 contributes to the Mg(2+) binding site. Asp-45 is an active-site residue. Mg(2+) is bound by residues Asp-114 and Glu-117. The active site involves Glu-117. Positions 155–225 constitute a DRBM domain; it reads DPKTRLQEYL…AEQALKQLEL (71 aa).

The protein belongs to the ribonuclease III family. In terms of assembly, homodimer. Requires Mg(2+) as cofactor.

The protein resides in the cytoplasm. It catalyses the reaction Endonucleolytic cleavage to 5'-phosphomonoester.. Digests double-stranded RNA. Involved in the processing of primary rRNA transcript to yield the immediate precursors to the large and small rRNAs (23S and 16S). Processes some mRNAs, and tRNAs when they are encoded in the rRNA operon. Processes pre-crRNA and tracrRNA of type II CRISPR loci if present in the organism. This chain is Ribonuclease 3, found in Yersinia enterocolitica serotype O:8 / biotype 1B (strain NCTC 13174 / 8081).